The sequence spans 851 residues: DNA mismatch repair protein MutS (851 aa).

An ATP-binding site is contributed by G602 to S609.

It belongs to the DNA mismatch repair MutS family.

This protein is involved in the repair of mismatches in DNA. It is possible that it carries out the mismatch recognition step. This protein has a weak ATPase activity. The protein is DNA mismatch repair protein MutS of Streptococcus pyogenes serotype M12 (strain MGAS2096).